The sequence spans 278 residues: Large ribosomal subunit protein uL2 (278 aa).

The disordered stretch occupies residues 218 to 278 (RPHNRGVVMN…IMRSRHQRKK (61 aa)).

It belongs to the universal ribosomal protein uL2 family. In terms of assembly, part of the 50S ribosomal subunit. Forms a bridge to the 30S subunit in the 70S ribosome.

Functionally, one of the primary rRNA binding proteins. Required for association of the 30S and 50S subunits to form the 70S ribosome, for tRNA binding and peptide bond formation. It has been suggested to have peptidyltransferase activity; this is somewhat controversial. Makes several contacts with the 16S rRNA in the 70S ribosome. This is Large ribosomal subunit protein uL2 from Rhizobium etli (strain ATCC 51251 / DSM 11541 / JCM 21823 / NBRC 15573 / CFN 42).